Consider the following 725-residue polypeptide: Polyribonucleotide nucleotidyltransferase (725 aa).

Positions 487 and 493 each coordinate Mg(2+). In terms of domain architecture, KH spans 554–613 (PRIETMQIPTDKIREVIGTGGKVIREIVEKTGAKIDIQDTGVIKIASSDAKAIKAAYNWI). Positions 623 to 691 (GMIYDGTVVK…ERGKIRLSMK (69 aa)) constitute an S1 motif domain. Positions 697 to 725 (TGEDITEKLKAEREADRNRERQARQSAGE) are disordered. The segment covering 701–719 (ITEKLKAEREADRNRERQA) has biased composition (basic and acidic residues).

This sequence belongs to the polyribonucleotide nucleotidyltransferase family. Mg(2+) is required as a cofactor.

The protein resides in the cytoplasm. It carries out the reaction RNA(n+1) + phosphate = RNA(n) + a ribonucleoside 5'-diphosphate. Involved in mRNA degradation. Catalyzes the phosphorolysis of single-stranded polyribonucleotides processively in the 3'- to 5'-direction. This Methylobacterium nodulans (strain LMG 21967 / CNCM I-2342 / ORS 2060) protein is Polyribonucleotide nucleotidyltransferase.